The primary structure comprises 318 residues: Transaldolase (318 aa).

Catalysis depends on Lys132, which acts as the Schiff-base intermediate with substrate.

It belongs to the transaldolase family. Type 1 subfamily. Homodimer.

Its subcellular location is the cytoplasm. The catalysed reaction is D-sedoheptulose 7-phosphate + D-glyceraldehyde 3-phosphate = D-erythrose 4-phosphate + beta-D-fructose 6-phosphate. It functions in the pathway carbohydrate degradation; pentose phosphate pathway; D-glyceraldehyde 3-phosphate and beta-D-fructose 6-phosphate from D-ribose 5-phosphate and D-xylulose 5-phosphate (non-oxidative stage): step 2/3. Its function is as follows. Transaldolase is important for the balance of metabolites in the pentose-phosphate pathway. The protein is Transaldolase of Shewanella baltica (strain OS185).